The primary structure comprises 352 residues: Photosystem II D2 protein (352 aa).

T2 is modified (N-acetylthreonine). T2 bears the Phosphothreonine mark. Residues 40 to 60 traverse the membrane as a helical segment; it reads CAYFALGGWLTGTTFVSSWYT. H117 is a binding site for chlorophyll a. A helical membrane pass occupies residues 124–140; sequence GFMLRQFEIARAVQIRP. Residues Q129 and N142 each coordinate pheophytin a. Residues 152-165 form a helical membrane-spanning segment; sequence VFVSVFLIYPLGQS. Chlorophyll a is bound at residue H197. A helical transmembrane segment spans residues 207–227; that stretch reads AALLCAIHGATVENTLFEDGD. A plastoquinone-binding residues include H214 and F261. H214 is a Fe cation binding site. Residue H268 coordinates Fe cation. A helical membrane pass occupies residues 278–294; sequence GLWMSALGVVGLALNLR.

This sequence belongs to the reaction center PufL/M/PsbA/D family. PSII is composed of 1 copy each of membrane proteins PsbA, PsbB, PsbC, PsbD, PsbE, PsbF, PsbH, PsbI, PsbJ, PsbK, PsbL, PsbM, PsbT, PsbX, PsbY, PsbZ, Psb30/Ycf12, at least 3 peripheral proteins of the oxygen-evolving complex and a large number of cofactors. It forms dimeric complexes. It depends on The D1/D2 heterodimer binds P680, chlorophylls that are the primary electron donor of PSII, and subsequent electron acceptors. It shares a non-heme iron and each subunit binds pheophytin, quinone, additional chlorophylls, carotenoids and lipids. There is also a Cl(-1) ion associated with D1 and D2, which is required for oxygen evolution. The PSII complex binds additional chlorophylls, carotenoids and specific lipids. as a cofactor.

It is found in the plastid. It localises to the chloroplast thylakoid membrane. The catalysed reaction is 2 a plastoquinone + 4 hnu + 2 H2O = 2 a plastoquinol + O2. In terms of biological role, photosystem II (PSII) is a light-driven water:plastoquinone oxidoreductase that uses light energy to abstract electrons from H(2)O, generating O(2) and a proton gradient subsequently used for ATP formation. It consists of a core antenna complex that captures photons, and an electron transfer chain that converts photonic excitation into a charge separation. The D1/D2 (PsbA/PsbD) reaction center heterodimer binds P680, the primary electron donor of PSII as well as several subsequent electron acceptors. D2 is needed for assembly of a stable PSII complex. The polypeptide is Photosystem II D2 protein (Ostreococcus tauri).